The following is a 376-amino-acid chain: Proton extrusion protein PxcA (376 aa).

4 helical membrane-spanning segments follow: residues 150–170 (TLISLKIILLLILVPLLVQQM), 251–271 (AVKNVLADIAALIAFAFVCII), 299–319 (IILFTDMFVGFHSPEGWQVLL), and 334–354 (FILLFIATFPVILATIFKYWI).

It belongs to the CemA family.

The protein resides in the cell inner membrane. In terms of biological role, required for H(+) efflux immediately after light irradiation to form a rapid H(+) concentration gradient across the thylakoid membranes. Together with PxcL, contributes to transient H(+) uptake following dark to light transition. The protein is Proton extrusion protein PxcA of Prochlorococcus marinus (strain MIT 9303).